The following is a 204-amino-acid chain: ATP phosphoribosyltransferase (204 aa).

The protein belongs to the ATP phosphoribosyltransferase family. Short subfamily. Heteromultimer composed of HisG and HisZ subunits.

The protein resides in the cytoplasm. It catalyses the reaction 1-(5-phospho-beta-D-ribosyl)-ATP + diphosphate = 5-phospho-alpha-D-ribose 1-diphosphate + ATP. Its pathway is amino-acid biosynthesis; L-histidine biosynthesis; L-histidine from 5-phospho-alpha-D-ribose 1-diphosphate: step 1/9. In terms of biological role, catalyzes the condensation of ATP and 5-phosphoribose 1-diphosphate to form N'-(5'-phosphoribosyl)-ATP (PR-ATP). Has a crucial role in the pathway because the rate of histidine biosynthesis seems to be controlled primarily by regulation of HisG enzymatic activity. The polypeptide is ATP phosphoribosyltransferase (Hydrogenobaculum sp. (strain Y04AAS1)).